We begin with the raw amino-acid sequence, 1137 residues long: 2'-5'-oligoadenylate synthase 3 (1137 aa).

Position 1 is an N-acetylmethionine (methionine 1). Positions 6 to 341 (TPAGALDKLV…GALVQPWEGP (336 aa)) are OAS domain 1. Interaction with dsRNA stretches follow at residues 12 to 56 (DKLV…VIRI) and 185 to 199 (ELRK…VKLK). The segment at 342–461 (GLPCAGILDL…GSQMGPDLSQ (120 aa)) is linker. Residues 434–453 (QSTASSNTPPGHSSMSTAGS) are compositionally biased toward polar residues. Residues 434 to 462 (QSTASSNTPPGHSSMSTAGSQMGPDLSQI) form a disordered region. OAS domain regions lie at residues 462–792 (IPSK…PWDV) and 800–1134 (TPAQ…WPVK). Serine 854 provides a ligand contact to ATP. Residues aspartate 866, aspartate 868, and aspartate 938 each coordinate Mg(2+). Residues arginine 997, lysine 1000, and glutamine 1019 each coordinate ATP.

The protein belongs to the 2-5A synthase family. In terms of assembly, monomer. Requires Mg(2+) as cofactor.

It is found in the cytoplasm. The protein localises to the nucleus. The catalysed reaction is 3 ATP = 5'-triphosphoadenylyl-(2'-&gt;5')-adenylyl-(2'-&gt;5')-adenosine + 2 diphosphate. With respect to regulation, produced as a latent enzyme which is activated by dsRNA generated during the course of viral infection. Strongly activated by long dsRNAs at least 50 nucleotides in length. ssRNA does not activate the enzyme. Its function is as follows. Interferon-induced, dsRNA-activated antiviral enzyme which plays a critical role in cellular innate antiviral response. In addition, it may also play a role in other cellular processes such as apoptosis, cell growth, differentiation and gene regulation. Synthesizes preferentially dimers of 2'-5'-oligoadenylates (2-5A) from ATP which then bind to the inactive monomeric form of ribonuclease L (RNase L) leading to its dimerization and subsequent activation. Activation of RNase L leads to degradation of cellular as well as viral RNA, resulting in the inhibition of protein synthesis, thus terminating viral replication. Can mediate the antiviral effect via the classical RNase L-dependent pathway or an alternative antiviral pathway independent of RNase L. This is 2'-5'-oligoadenylate synthase 3 (Oas3) from Rattus norvegicus (Rat).